Here is a 213-residue protein sequence, read N- to C-terminus: MRSKYIVIEGLEGAGKTTARNVVVETLEQLGIRDMVFTREPGGTQLAEKLRSLVLDIKSVGDEVITDKAEVLMFYAARVQLVETVIKPALANGTWVIGDRHDLSTQAYQGGGRGIDQHMLATLRDAVLGDFRPDLTLYLDVTPEVGLKRARARGELDRIEQESFDFFNRTRARYLELAAQDKSIHTIDATQPLEAVMGAIRTTVTNWVKELDA.

10–17 (GLEGAGKT) lines the ATP pocket.

Belongs to the thymidylate kinase family.

It catalyses the reaction dTMP + ATP = dTDP + ADP. Phosphorylation of dTMP to form dTDP in both de novo and salvage pathways of dTTP synthesis. In Escherichia coli O81 (strain ED1a), this protein is Thymidylate kinase.